The primary structure comprises 343 residues: Probable dual-specificity RNA methyltransferase RlmN (343 aa).

The active-site Proton acceptor is Glu91. The 230-residue stretch at 97 to 326 (HPDRITACIS…AEIRREKGTD (230 aa)) folds into the Radical SAM core domain. Cys104 and Cys331 are oxidised to a cystine. Residues Cys111, Cys115, and Cys118 each coordinate [4Fe-4S] cluster. S-adenosyl-L-methionine contacts are provided by residues 158 to 159 (GE), Ser190, 213 to 215 (SLH), and Asn289. The active-site S-methylcysteine intermediate is the Cys331.

Belongs to the radical SAM superfamily. RlmN family. [4Fe-4S] cluster is required as a cofactor.

The protein resides in the cytoplasm. The enzyme catalyses adenosine(2503) in 23S rRNA + 2 reduced [2Fe-2S]-[ferredoxin] + 2 S-adenosyl-L-methionine = 2-methyladenosine(2503) in 23S rRNA + 5'-deoxyadenosine + L-methionine + 2 oxidized [2Fe-2S]-[ferredoxin] + S-adenosyl-L-homocysteine. The catalysed reaction is adenosine(37) in tRNA + 2 reduced [2Fe-2S]-[ferredoxin] + 2 S-adenosyl-L-methionine = 2-methyladenosine(37) in tRNA + 5'-deoxyadenosine + L-methionine + 2 oxidized [2Fe-2S]-[ferredoxin] + S-adenosyl-L-homocysteine. Specifically methylates position 2 of adenine 2503 in 23S rRNA and position 2 of adenine 37 in tRNAs. The chain is Probable dual-specificity RNA methyltransferase RlmN from Thermotoga maritima (strain ATCC 43589 / DSM 3109 / JCM 10099 / NBRC 100826 / MSB8).